We begin with the raw amino-acid sequence, 122 residues long: Large ribosomal subunit protein uL14c (122 aa).

It belongs to the universal ribosomal protein uL14 family. In terms of assembly, part of the 50S ribosomal subunit.

The protein resides in the plastid. Its subcellular location is the chloroplast. Functionally, binds to 23S rRNA. This chain is Large ribosomal subunit protein uL14c, found in Mesostigma viride (Green alga).